A 261-amino-acid polypeptide reads, in one-letter code: tRNA U34 carboxymethyltransferase (261 aa).

Carboxy-S-adenosyl-L-methionine contacts are provided by residues Lys-25, Trp-39, Lys-44, Gly-63, 114–115 (VE), Tyr-135, and Arg-250.

This sequence belongs to the class I-like SAM-binding methyltransferase superfamily. CmoB family. As to quaternary structure, homotetramer.

The enzyme catalyses carboxy-S-adenosyl-L-methionine + 5-hydroxyuridine(34) in tRNA = 5-carboxymethoxyuridine(34) in tRNA + S-adenosyl-L-homocysteine + H(+). Functionally, catalyzes carboxymethyl transfer from carboxy-S-adenosyl-L-methionine (Cx-SAM) to 5-hydroxyuridine (ho5U) to form 5-carboxymethoxyuridine (cmo5U) at position 34 in tRNAs. This Helicobacter pylori (strain ATCC 700392 / 26695) (Campylobacter pylori) protein is tRNA U34 carboxymethyltransferase.